A 194-amino-acid polypeptide reads, in one-letter code: dCTP deaminase (194 aa).

Residues 110 to 115 (RSSLAR), Asp-128, 136 to 138 (VLE), Tyr-171, Lys-178, and Gln-182 each bind dCTP. The active-site Proton donor/acceptor is Glu-138. A disordered region spans residues 173-194 (SRQDAKYKNQQSAVASRINQDR). Residues 180-194 (KNQQSAVASRINQDR) are compositionally biased toward polar residues.

Belongs to the dCTP deaminase family. As to quaternary structure, homotrimer.

The catalysed reaction is dCTP + H2O + H(+) = dUTP + NH4(+). It functions in the pathway pyrimidine metabolism; dUMP biosynthesis; dUMP from dCTP (dUTP route): step 1/2. Functionally, catalyzes the deamination of dCTP to dUTP. The sequence is that of dCTP deaminase from Actinobacillus succinogenes (strain ATCC 55618 / DSM 22257 / CCUG 43843 / 130Z).